The chain runs to 522 residues: Tyrosine-protein phosphatase 1 (522 aa).

The tract at residues 32–63 (RSNSSISLSSSSHSSFSRMGSLGSLPTNSGSS) is disordered. Residues 33-63 (SNSSISLSSSSHSSFSRMGSLGSLPTNSGSS) show a composition bias toward low complexity. One can recognise a Tyrosine-protein phosphatase domain in the interval 97 to 471 (IKEEFRLLEE…LFCYKTILDE (375 aa)). C310 (phosphocysteine intermediate) is an active-site residue. Residues 327–426 (MKKLDHYFKQ…DDAAESDLKY (100 aa)) are PTPase insert (Asn-rich). Residues 382-410 (NNNNNNNLNNNNNINNNSNGSNNTPQTEP) show a composition bias toward low complexity. The tract at residues 382–420 (NNNNNNNLNNNNNINNNSNGSNNTPQTEPNNEEDDDDAA) is disordered. Residues 411-420 (NNEEDDDDAA) are compositionally biased toward acidic residues.

The protein belongs to the protein-tyrosine phosphatase family. Non-receptor class subfamily. In terms of tissue distribution, expressed predominantly in anterior-like cells and to a lesser degree in prestalk cells.

The protein resides in the cytoplasm. Its subcellular location is the cell membrane. It carries out the reaction O-phospho-L-tyrosyl-[protein] + H2O = L-tyrosyl-[protein] + phosphate. Functionally, may have a role in growth and in the early stages of development. Affects the timing of development. The chain is Tyrosine-protein phosphatase 1 (ptpA1-1) from Dictyostelium discoideum (Social amoeba).